A 380-amino-acid chain; its full sequence is GPI-anchor transamidase (380 aa).

The N-terminal stretch at 1–19 is a signal peptide; that stretch reads MIVQFVALLLLNLLQIIAA. The Lumenal portion of the chain corresponds to 20–354; sequence ESSHTNNWAV…TRELKYKKHP (335 aa). Catalysis depends on residues His-145 and Cys-187. Residue Asn-307 is glycosylated (N-linked (GlcNAc...) asparagine). A helical membrane pass occupies residues 355-375; the sequence is ISRIISAVVCISFSIGFPYYA. The Cytoplasmic segment spans residues 376-380; sequence SKYLK.

It belongs to the peptidase C13 family. Forms a complex with PIG-T homolog, PIG-U homolog and PIG-S homolog. The disulfide bond between PIGK/GPI8 and PIGT is important for normal enzyme activity.

It is found in the endoplasmic reticulum membrane. Its pathway is glycolipid biosynthesis; glycosylphosphatidylinositol-anchor biosynthesis. Mediates GPI anchoring in the endoplasmic reticulum, by replacing a protein's C-terminal GPI attachment signal peptide with a pre-assembled GPI. During this transamidation reaction, the GPI transamidase forms a carbonyl intermediate with the substrate protein. The sequence is that of GPI-anchor transamidase (gpi8) from Schizosaccharomyces pombe (strain 972 / ATCC 24843) (Fission yeast).